The chain runs to 73 residues: Translation initiation factor IF-1 (73 aa).

Positions 1-73 constitute an S1-like domain; the sequence is MGKKEEAFEV…TKGRIVYRER (73 aa).

It belongs to the IF-1 family. In terms of assembly, component of the 30S ribosomal translation pre-initiation complex which assembles on the 30S ribosome in the order IF-2 and IF-3, IF-1 and N-formylmethionyl-tRNA(fMet); mRNA recruitment can occur at any time during PIC assembly.

The protein resides in the cytoplasm. One of the essential components for the initiation of protein synthesis. Stabilizes the binding of IF-2 and IF-3 on the 30S subunit to which N-formylmethionyl-tRNA(fMet) subsequently binds. Helps modulate mRNA selection, yielding the 30S pre-initiation complex (PIC). Upon addition of the 50S ribosomal subunit IF-1, IF-2 and IF-3 are released leaving the mature 70S translation initiation complex. The sequence is that of Translation initiation factor IF-1 from Rhodopirellula baltica (strain DSM 10527 / NCIMB 13988 / SH1).